A 367-amino-acid polypeptide reads, in one-letter code: Ferredoxin--NADP reductase 2 (367 aa).

FAD contacts are provided by Asp56, Gln64, Tyr69, Val109, Phe144, Asp309, and Thr350.

This sequence belongs to the ferredoxin--NADP reductase type 2 family. In terms of assembly, homodimer. It depends on FAD as a cofactor.

The enzyme catalyses 2 reduced [2Fe-2S]-[ferredoxin] + NADP(+) + H(+) = 2 oxidized [2Fe-2S]-[ferredoxin] + NADPH. This chain is Ferredoxin--NADP reductase 2, found in Cupriavidus metallidurans (strain ATCC 43123 / DSM 2839 / NBRC 102507 / CH34) (Ralstonia metallidurans).